We begin with the raw amino-acid sequence, 1642 residues long: Cortactin-binding protein 2 (1642 aa).

Disordered stretches follow at residues Met-1–Ala-27, Lys-203–Glu-222, Ile-366–Leu-433, Gly-446–Ser-471, and Arg-491–Asp-611. The stretch at Arg-119–Lys-276 forms a coiled coil. Residues Gly-385–Leu-394 are compositionally biased toward polar residues. Over residues Thr-395–Pro-407 the composition is skewed to low complexity. Arg-491 bears the Asymmetric dimethylarginine mark. Positions Ala-497 to Pro-506 are enriched in pro residues. The segment covering Thr-576–Gln-586 has biased composition (polar residues). 6 ANK repeats span residues Gly-702–Tyr-732, Asp-736–Ala-765, Asn-769–His-798, Gly-802–Val-831, Asp-835–Gly-864, and Glu-904–Arg-934. Positions Ser-1441–Ser-1469 are disordered. Ser-1513 bears the Phosphoserine mark. Residues Leu-1545–Lys-1642 form a disordered region. Polar residues-rich tracts occupy residues Gly-1552–Asn-1563 and Lys-1571–Lys-1588. Over residues Ser-1613–Gln-1627 the composition is skewed to low complexity.

As to quaternary structure, interacts with CTTN/cortactin SH3 domain. Interacts with STRN, STRN4/zinedin and MOB4/phocein; this interactions mediate the association with the STRIPAK core complex and may regulate dendritic spine distribution of the STRIPAK complex in hippocampal neurons. Activation of glutamate receptors weakens the interaction with STRN and STRN4.

Its subcellular location is the cytoplasm. It localises to the cell cortex. The protein localises to the cell projection. It is found in the dendritic spine. Regulates the dendritic spine distribution of CTTN/cortactin in hippocampal neurons, and thus controls dendritic spinogenesis and dendritic spine maintenance. Associates with the striatin-interacting phosphatase and kinase (STRIPAK) core complex to regulate dendritic spine distribution of the STRIPAK complex in hippocampal neurons. This chain is Cortactin-binding protein 2 (CTTNBP2), found in Muntiacus muntjak (Barking deer).